A 167-amino-acid polypeptide reads, in one-letter code: Large ribosomal subunit protein uL10 (167 aa).

It belongs to the universal ribosomal protein uL10 family. In terms of assembly, part of the ribosomal stalk of the 50S ribosomal subunit. The N-terminus interacts with L11 and the large rRNA to form the base of the stalk. The C-terminus forms an elongated spine to which L12 dimers bind in a sequential fashion forming a multimeric L10(L12)X complex.

Functionally, forms part of the ribosomal stalk, playing a central role in the interaction of the ribosome with GTP-bound translation factors. The polypeptide is Large ribosomal subunit protein uL10 (Psychromonas ingrahamii (strain DSM 17664 / CCUG 51855 / 37)).